The chain runs to 375 residues: MKPRFAFSISATDGAARAGVIAMQRGEIRTPAFMPVGTAATVKAMRPAEVRAAGADIILGNTYHLMLRPTAERMARFGGLHKFMGWDRPILTDSGGYQVMSLSALTKQSEEGVAFKSHLDGSRHMLTPERSMEIQRLLGSDIVMAFDECPPAGVDARRAEASMERSMRWAARSRAGFDAGEEHAARSALFGIQQGSLDEKLRARSAATLIDIGFDGYAIGGLAVGEGQAAMFGVLDFAPAQLPADRPRYLMGVGKPDDLVGAVARGVDMFDCVLPTRSGRNGQAFTWDGPLNIRNAKFADDQEPLDASCGCPVCTIWSRGYLHHLVRAGEMLGAMLMTQHNIHFYQDLMQAMRDAITTGRFAAFRSDFAARYRRA.

The active-site Proton acceptor is the Asp-93. Substrate is bound by residues 93–97, Asp-147, Gln-194, and Gly-221; that span reads DSGGY. The tract at residues 252 to 258 is RNA binding; it reads GVGKPDD. Residue Asp-271 is the Nucleophile of the active site. The segment at 276–280 is RNA binding; important for wobble base 34 recognition; it reads TRSGR. Zn(2+)-binding residues include Cys-309, Cys-311, Cys-314, and His-340.

The protein belongs to the queuine tRNA-ribosyltransferase family. In terms of assembly, homodimer. Within each dimer, one monomer is responsible for RNA recognition and catalysis, while the other monomer binds to the replacement base PreQ1. Zn(2+) is required as a cofactor.

It carries out the reaction 7-aminomethyl-7-carbaguanine + guanosine(34) in tRNA = 7-aminomethyl-7-carbaguanosine(34) in tRNA + guanine. It functions in the pathway tRNA modification; tRNA-queuosine biosynthesis. Catalyzes the base-exchange of a guanine (G) residue with the queuine precursor 7-aminomethyl-7-deazaguanine (PreQ1) at position 34 (anticodon wobble position) in tRNAs with GU(N) anticodons (tRNA-Asp, -Asn, -His and -Tyr). Catalysis occurs through a double-displacement mechanism. The nucleophile active site attacks the C1' of nucleotide 34 to detach the guanine base from the RNA, forming a covalent enzyme-RNA intermediate. The proton acceptor active site deprotonates the incoming PreQ1, allowing a nucleophilic attack on the C1' of the ribose to form the product. After dissociation, two additional enzymatic reactions on the tRNA convert PreQ1 to queuine (Q), resulting in the hypermodified nucleoside queuosine (7-(((4,5-cis-dihydroxy-2-cyclopenten-1-yl)amino)methyl)-7-deazaguanosine). The polypeptide is Queuine tRNA-ribosyltransferase (Sphingopyxis alaskensis (strain DSM 13593 / LMG 18877 / RB2256) (Sphingomonas alaskensis)).